The primary structure comprises 63 residues: Phylloseptin-Az1 (63 aa).

Residues 1–19 form the signal peptide; that stretch reads LKKSLFLVVFLGLATLSIC. Positions 20–41 are excised as a propeptide; the sequence is EEEKRETEEEEYNQGEDDKSEE. Phenylalanine 62 carries the post-translational modification Phenylalanine amide.

Expressed by the skin glands.

The protein localises to the secreted. Functionally, has antimicrobial activity. In Pithecopus azureus (Orange-legged monkey tree frog), this protein is Phylloseptin-Az1.